Reading from the N-terminus, the 420-residue chain is Probable protein phosphatase 2C 73 (420 aa).

The region spanning 33–336 (GVSMHTKQGW…DDCAVVCLFL (304 aa)) is the PPM-type phosphatase domain. Positions 69 and 70 each coordinate Mn(2+). A compositionally biased stretch (polar residues) spans 96 to 105 (LKTEQDPSSN). Residues 96-119 (LKTEQDPSSNTDKETLEKSDCTSL) form a disordered region. Over residues 106–115 (TDKETLEKSD) the composition is skewed to basic and acidic residues. 2 residues coordinate Mn(2+): aspartate 281 and aspartate 327.

The protein belongs to the PP2C family. It depends on Mg(2+) as a cofactor. The cofactor is Mn(2+).

The catalysed reaction is O-phospho-L-seryl-[protein] + H2O = L-seryl-[protein] + phosphate. It catalyses the reaction O-phospho-L-threonyl-[protein] + H2O = L-threonyl-[protein] + phosphate. The chain is Probable protein phosphatase 2C 73 from Oryza sativa subsp. japonica (Rice).